The following is a 290-amino-acid chain: Ribosomal RNA small subunit methyltransferase A (290 aa).

S-adenosyl-L-methionine is bound by residues N27, L29, G54, E75, D100, and N125.

The protein belongs to the class I-like SAM-binding methyltransferase superfamily. rRNA adenine N(6)-methyltransferase family. RsmA subfamily.

It localises to the cytoplasm. It catalyses the reaction adenosine(1518)/adenosine(1519) in 16S rRNA + 4 S-adenosyl-L-methionine = N(6)-dimethyladenosine(1518)/N(6)-dimethyladenosine(1519) in 16S rRNA + 4 S-adenosyl-L-homocysteine + 4 H(+). Its function is as follows. Specifically dimethylates two adjacent adenosines (A1518 and A1519) in the loop of a conserved hairpin near the 3'-end of 16S rRNA in the 30S particle. May play a critical role in biogenesis of 30S subunits. The protein is Ribosomal RNA small subunit methyltransferase A of Streptococcus pyogenes serotype M1.